Reading from the N-terminus, the 357-residue chain is 4-hydroxymandelate oxidase (357 aa).

Residues 1 to 357 (MTYVSLADLE…RRLNTKLGVV (357 aa)) form the FMN hydroxy acid dehydrogenase domain. An FMN-binding site is contributed by Q126. Y128 provides a ligand contact to a 2-oxocarboxylate. T154 lines the FMN pocket. R163 is an a 2-oxocarboxylate binding site. Position 228 (K228) interacts with FMN. Residue H252 is the Proton acceptor of the active site. A 2-oxocarboxylate is bound at residue R255. Residues 283 to 287 (DGGIR) and 306 to 307 (GR) each bind FMN.

Belongs to the FMN-dependent alpha-hydroxy acid dehydrogenase family. The cofactor is FMN.

It catalyses the reaction (S)-4-hydroxymandelate + O2 = 4-hydroxyphenylglyoxylate + H2O2. It functions in the pathway antibiotic biosynthesis; vancomycin biosynthesis. In terms of biological role, catalyzes the oxidation of p-hydroxymandelate to p-hydroxybenzoylformate in the biosynthesis of L-(4-hydroxyphenyl)glycine and L-(3,5-dihydroxyphenyl)glycine, 2 non-proteinogenic amino acids occurring in the vancomycin group of antibiotics. This Amycolatopsis orientalis (Nocardia orientalis) protein is 4-hydroxymandelate oxidase (hmo).